A 377-amino-acid polypeptide reads, in one-letter code: Succinyl-diaminopimelate desuccinylase (377 aa).

Histidine 67 contributes to the Zn(2+) binding site. The active site involves aspartate 69. Aspartate 100 contributes to the Zn(2+) binding site. The active-site Proton acceptor is the glutamate 134. Residues glutamate 135, glutamate 163, and histidine 349 each coordinate Zn(2+).

Belongs to the peptidase M20A family. DapE subfamily. As to quaternary structure, homodimer. It depends on Zn(2+) as a cofactor. Requires Co(2+) as cofactor.

The enzyme catalyses N-succinyl-(2S,6S)-2,6-diaminopimelate + H2O = (2S,6S)-2,6-diaminopimelate + succinate. Its pathway is amino-acid biosynthesis; L-lysine biosynthesis via DAP pathway; LL-2,6-diaminopimelate from (S)-tetrahydrodipicolinate (succinylase route): step 3/3. Catalyzes the hydrolysis of N-succinyl-L,L-diaminopimelic acid (SDAP), forming succinate and LL-2,6-diaminopimelate (DAP), an intermediate involved in the bacterial biosynthesis of lysine and meso-diaminopimelic acid, an essential component of bacterial cell walls. The polypeptide is Succinyl-diaminopimelate desuccinylase (Buchnera aphidicola subsp. Baizongia pistaciae (strain Bp)).